A 170-amino-acid polypeptide reads, in one-letter code: Protein AIG2 A (170 aa).

Substrate is bound at residue 15 to 20 (YGSFQE). Catalysis depends on Glu83, which acts as the Proton acceptor. Residues 147–162 (KNPNGRSREEFEKFVQ) show a composition bias toward basic and acidic residues. The segment at 147 to 170 (KNPNGRSREEFEKFVQDDSSPASA) is disordered.

The protein belongs to the gamma-glutamylcyclotransferase family. In terms of tissue distribution, ubiquitous.

Its function is as follows. Putative gamma-glutamylcyclotransferase. The polypeptide is Protein AIG2 A (Arabidopsis thaliana (Mouse-ear cress)).